Here is a 449-residue protein sequence, read N- to C-terminus: Phosphomannomutase (449 aa).

The active-site Phosphoserine intermediate is serine 97. Residues serine 97, aspartate 237, aspartate 239, and aspartate 241 each contribute to the Mg(2+) site.

Belongs to the phosphohexose mutase family. The cofactor is Mg(2+).

The enzyme catalyses alpha-D-mannose 1-phosphate = D-mannose 6-phosphate. Its pathway is amino-acid biosynthesis. Functionally, catalyzes the formation of mannose-1-P from mannose-6-P. Can also use glucose-6-P. This Methanocaldococcus jannaschii (strain ATCC 43067 / DSM 2661 / JAL-1 / JCM 10045 / NBRC 100440) (Methanococcus jannaschii) protein is Phosphomannomutase (manB).